The primary structure comprises 100 residues: NADH-quinone oxidoreductase subunit K (100 aa).

A run of 3 helical transmembrane segments spans residues tyrosine 4–valine 24, isoleucine 28–alanine 48, and valine 60–isoleucine 80.

The protein belongs to the complex I subunit 4L family. As to quaternary structure, NDH-1 is composed of 14 different subunits. Subunits NuoA, H, J, K, L, M, N constitute the membrane sector of the complex.

The protein resides in the cell inner membrane. It carries out the reaction a quinone + NADH + 5 H(+)(in) = a quinol + NAD(+) + 4 H(+)(out). In terms of biological role, NDH-1 shuttles electrons from NADH, via FMN and iron-sulfur (Fe-S) centers, to quinones in the respiratory chain. The immediate electron acceptor for the enzyme in this species is believed to be ubiquinone. Couples the redox reaction to proton translocation (for every two electrons transferred, four hydrogen ions are translocated across the cytoplasmic membrane), and thus conserves the redox energy in a proton gradient. This is NADH-quinone oxidoreductase subunit K from Sulfurihydrogenibium azorense (strain DSM 15241 / OCM 825 / Az-Fu1).